The primary structure comprises 174 residues: MTQPIFLVGPRGCGKTTVGLELARACQSQFVDTDHWLQTKAGRTIAEIVEKEGWETFRALETETLKAVSAPSTVIATGGGIILAEHNRGFMREHGIVIYLCAPVATLVERLEAFPEEGQRPTLTGKPISDEVSEVLAERDALYREAAHHVVDASQTPEQVVSHIVTALRLACAS.

12–17 lines the ATP pocket; it reads GCGKTT. Positions 16 and 32 each coordinate Mg(2+). D34, R58, and G79 together coordinate substrate. The tract at residues 112 to 126 is LID domain; sequence EAFPEEGQRPTLTGK. ATP is bound at residue R120. Substrate is bound at residue R139. Position 155 (Q155) interacts with ATP.

The protein belongs to the shikimate kinase family. AroL subfamily. In terms of assembly, monomer. Requires Mg(2+) as cofactor.

It is found in the cytoplasm. The enzyme catalyses shikimate + ATP = 3-phosphoshikimate + ADP + H(+). It participates in metabolic intermediate biosynthesis; chorismate biosynthesis; chorismate from D-erythrose 4-phosphate and phosphoenolpyruvate: step 5/7. Functionally, catalyzes the specific phosphorylation of the 3-hydroxyl group of shikimic acid using ATP as a cosubstrate. This chain is Shikimate kinase 2, found in Enterobacter sp. (strain 638).